Reading from the N-terminus, the 254-residue chain is MVPWLGPDDPFPPVERALGPATGAPGLLAASADLLPSRLIEAYLRGIFPWYSDGQPVLWWSPDPRMILAPAEFKVSPSLRKTLRRVLREPAWEVRVDHDFAGVMRACAQAPRRGQRGTWITAEIIDAYTSLYRSGNAHSIETWHDGRRIGGLYGVAFGRMFFGESMYADATDASKIALATLVAHLREQGLEMIDCQQNTSHLASLGGREIARKAFVAHVRRAVAEPPIPWQFDKRVLAALTGPAEPAAPSGIER.

Belongs to the L/F-transferase family.

The protein localises to the cytoplasm. The catalysed reaction is N-terminal L-lysyl-[protein] + L-leucyl-tRNA(Leu) = N-terminal L-leucyl-L-lysyl-[protein] + tRNA(Leu) + H(+). It catalyses the reaction N-terminal L-arginyl-[protein] + L-leucyl-tRNA(Leu) = N-terminal L-leucyl-L-arginyl-[protein] + tRNA(Leu) + H(+). It carries out the reaction L-phenylalanyl-tRNA(Phe) + an N-terminal L-alpha-aminoacyl-[protein] = an N-terminal L-phenylalanyl-L-alpha-aminoacyl-[protein] + tRNA(Phe). Its function is as follows. Functions in the N-end rule pathway of protein degradation where it conjugates Leu, Phe and, less efficiently, Met from aminoacyl-tRNAs to the N-termini of proteins containing an N-terminal arginine or lysine. The chain is Leucyl/phenylalanyl-tRNA--protein transferase from Burkholderia ambifaria (strain MC40-6).